A 375-amino-acid chain; its full sequence is Actin, cytoplasmic (375 aa).

It belongs to the actin family.

The protein resides in the cytoplasm. The protein localises to the cytoskeleton. It carries out the reaction ATP + H2O = ADP + phosphate + H(+). Its function is as follows. Actins are highly conserved proteins that are involved in various types of cell motility and are ubiquitously expressed in all eukaryotic cells. This chain is Actin, cytoplasmic, found in Oxytricha trifallax (Sterkiella histriomuscorum).